The following is a 425-amino-acid chain: Tol-Pal system protein TolB (425 aa).

The first 23 residues, 1 to 23 (MQMMKKRILLCLLVGMTCLPVLA), serve as a signal peptide directing secretion.

Belongs to the TolB family. As to quaternary structure, the Tol-Pal system is composed of five core proteins: the inner membrane proteins TolA, TolQ and TolR, the periplasmic protein TolB and the outer membrane protein Pal. They form a network linking the inner and outer membranes and the peptidoglycan layer.

The protein localises to the periplasm. In terms of biological role, part of the Tol-Pal system, which plays a role in outer membrane invagination during cell division and is important for maintaining outer membrane integrity. The chain is Tol-Pal system protein TolB from Albidiferax ferrireducens (strain ATCC BAA-621 / DSM 15236 / T118) (Rhodoferax ferrireducens).